The chain runs to 81 residues: uncharacterized protein (81 aa).

The tract at residues 55-81 (LDKRNSNNKIEKSENTGENHDNNQDQK) is disordered.

This is an uncharacterized protein from Thermoproteus tenax virus 1 (strain KRA1) (TTV1).